We begin with the raw amino-acid sequence, 324 residues long: tRNA pseudouridine synthase B (324 aa).

The Nucleophile role is filled by D49. The tract at residues 87-107 is disordered; that stretch reads RSTDDLEGQPTKTSDKRPSRE.

It belongs to the pseudouridine synthase TruB family. Type 1 subfamily.

It carries out the reaction uridine(55) in tRNA = pseudouridine(55) in tRNA. In terms of biological role, responsible for synthesis of pseudouridine from uracil-55 in the psi GC loop of transfer RNAs. The chain is tRNA pseudouridine synthase B from Brucella canis (strain ATCC 23365 / NCTC 10854 / RM-666).